A 488-amino-acid polypeptide reads, in one-letter code: UDP-N-acetylmuramate--L-alanine ligase (488 aa).

127-133 is a binding site for ATP; it reads GTHGKTT.

Belongs to the MurCDEF family.

The protein localises to the cytoplasm. The enzyme catalyses UDP-N-acetyl-alpha-D-muramate + L-alanine + ATP = UDP-N-acetyl-alpha-D-muramoyl-L-alanine + ADP + phosphate + H(+). It functions in the pathway cell wall biogenesis; peptidoglycan biosynthesis. Functionally, cell wall formation. The polypeptide is UDP-N-acetylmuramate--L-alanine ligase (Shewanella baltica (strain OS223)).